The chain runs to 192 residues: MAP6 domain-containing protein 1 (192 aa).

3 S-palmitoyl cysteine lipidation sites follow: cysteine 5, cysteine 10, and cysteine 11. Residues leucine 36–arginine 106 form a disordered region. At serine 38 the chain carries Phosphoserine. Low complexity predominate over residues proline 43–arginine 58. Mn stretches follow at residues threonine 123–valine 136 and aspartate 158–valine 170. Serine 160 carries the post-translational modification Phosphoserine.

It belongs to the STOP family. In terms of assembly, interacts with calmodulin. Palmitoylated. Palmitoylation enhances association with microtubules.

The protein localises to the golgi apparatus. The protein resides in the cytoplasm. It is found in the cytoskeleton. In terms of biological role, may have microtubule-stabilizing activity. This Bos taurus (Bovine) protein is MAP6 domain-containing protein 1 (MAP6D1).